Here is a 756-residue protein sequence, read N- to C-terminus: Ent-kaurene synthase, chloroplastic (756 aa).

Aspartate 507 and aspartate 511 together coordinate Mg(2+). The DDXXD motif motif lies at 507–511 (DDFFD). The helical transmembrane segment at 606-622 (YVSFALGPIVLPCLYLV) threads the bilayer. The Mg(2+) site is built by asparagine 651, threonine 655, and glutamate 659.

This sequence belongs to the terpene synthase family. It depends on Mg(2+) as a cofactor. Present in both leaves and flowers.

The protein localises to the plastid. The protein resides in the chloroplast membrane. The catalysed reaction is ent-copalyl diphosphate = ent-kaur-16-ene + diphosphate. The protein operates within plant hormone biosynthesis; gibberellin biosynthesis. Functionally, involved in the biosynthesis of labdane-type diterpenoid including marrubiin and other labdane-related furanoid diterpenoids with potential applications as anti-diabetics, analgesics or vasorelaxants. Terpene synthase that produces ent-kaurene from ent-copalyl diphosphate (ent-CPP). This is Ent-kaurene synthase, chloroplastic from Marrubium vulgare (White horehound).